Reading from the N-terminus, the 307-residue chain is Ornithine carbamoyltransferase (307 aa).

Carbamoyl phosphate is bound by residues 50–53 (STRT), Gln77, Arg101, and 128–131 (HPCQ). L-ornithine contacts are provided by residues Asn160, Asp224, and 228 to 229 (SM). Carbamoyl phosphate-binding positions include 264–265 (CL) and Arg292.

The protein belongs to the aspartate/ornithine carbamoyltransferase superfamily. OTCase family.

The protein resides in the cytoplasm. It carries out the reaction carbamoyl phosphate + L-ornithine = L-citrulline + phosphate + H(+). It functions in the pathway amino-acid biosynthesis; L-arginine biosynthesis; L-arginine from L-ornithine and carbamoyl phosphate: step 1/3. In terms of biological role, reversibly catalyzes the transfer of the carbamoyl group from carbamoyl phosphate (CP) to the N(epsilon) atom of ornithine (ORN) to produce L-citrulline. This is Ornithine carbamoyltransferase from Clavibacter michiganensis subsp. michiganensis (strain NCPPB 382).